Here is a 168-residue protein sequence, read N- to C-terminus: Putative F-box protein At1g30945 (168 aa).

In terms of domain architecture, F-box spans 5–52; sequence KTFDSISNDLFLEILLRLSTKSIDRSRCVSKQWASILCSQDFTESEKF.

This Arabidopsis thaliana (Mouse-ear cress) protein is Putative F-box protein At1g30945.